We begin with the raw amino-acid sequence, 545 residues long: DNA mismatch repair protein MutL (545 aa).

Residues 516–545 are disordered; it reads GRRSGARGGGEARPRPQEESFPEAPLPREP.

It belongs to the DNA mismatch repair MutL/HexB family.

Its function is as follows. This protein is involved in the repair of mismatches in DNA. It is required for dam-dependent methyl-directed DNA mismatch repair. May act as a 'molecular matchmaker', a protein that promotes the formation of a stable complex between two or more DNA-binding proteins in an ATP-dependent manner without itself being part of a final effector complex. The polypeptide is DNA mismatch repair protein MutL (Thermus thermophilus (strain ATCC BAA-163 / DSM 7039 / HB27)).